The chain runs to 132 residues: DNA-binding protein inhibitor ID-2 (132 aa).

The bHLH domain occupies 23–75 (ARSKTPVDDPMSLLYNMNDCYSKLKELVPSIPQNKKVSKMEILQHVIDYILDL). The Nuclear export signal motif lies at 105–114 (LNTDISILSL).

Heterodimer with other HLH proteins.

It is found in the cytoplasm. The protein localises to the nucleus. Functionally, transcriptional regulator (lacking a basic DNA binding domain) which negatively regulates the basic helix-loop-helix (bHLH) transcription factors by forming heterodimers and inhibiting their DNA binding and transcriptional activity. Inhibits the activity of both neurogenic (neurod1/neuroD) and myogenic (myod1/myoD) bHLH factors. May play a role in the regulation of the circadian clock. This Xenopus tropicalis (Western clawed frog) protein is DNA-binding protein inhibitor ID-2.